The sequence spans 315 residues: Long form salivary protein D7L1 (315 aa).

An N-terminal signal peptide occupies residues 1-18 (MIIVAVLLSFLAHLLVQA). 2 disulfide bridges follow: C37-C73 and C69-C128. Thromboxane A2 is bound at residue W55. Residue W58 coordinates leukotriene C4. Residue Y70 coordinates thromboxane A2. Leukotriene C4-binding residues include G152 and K170. Position 170 (K170) interacts with thromboxane A2. Cystine bridges form between C178–C211 and C252–C263.

The protein belongs to the PBP/GOBP family. As to expression, distal-lateral and median lobes of female salivary gland (at protein level). Not detected in male salivary gland (at protein level). Expressed in female salivary gland. Not detected in female carcass without salivary glands. Expressed in male salivary gland and other tissues.

It localises to the secreted. In terms of biological role, modulates blood feeding of female mosquitoes on vertebrate species by binding and sequestering different mediators involved in the host response. Binds leukotriene C4, leukotriene D4, leukotriene E4 and stable analogs of thromboxane A2, U-46619 and carbocyclic TXA2. Binds weakly prostaglandins: PGD2, PGE2 and PGF2alpha. Does not bind leukotriene B4, biogenic amines, ADP, platelet activating phospholipid derivative PAF and arachidonic acid. Inhibits agonist-induced smooth muscle contraction. Inhibits platelet aggregation induced by low concentrations of collagen in thromboxane A2-dependent manner. The polypeptide is Long form salivary protein D7L1 (Anopheles stephensi (Indo-Pakistan malaria mosquito)).